The primary structure comprises 492 residues: Vacuolar fusion protein CCZ1 homolog (492 aa).

Residues 255–275 form a disordered region; that stretch reads SVHAGPTSSSSNGTASVERPL. The segment covering 260 to 269 has biased composition (polar residues); sequence PTSSSSNGTA.

It belongs to the CCZ1 family. Interacts with MON1.

The protein localises to the endosome. It localises to the prevacuolar compartment. Plays an important role in membrane trafficking through the secretory apparatus. In complex with MON1, acts as a guanine exchange factor (GEF) for Rab7 protein family. Promotes the exchange of GDP to GTP, converting it from an inactive GDP-bound form into an active GTP-bound form. The active form is involved in protein trafficking from prevacuolar compartments (PVCs) to vacuoles. May serve as a linker between Rab5 and Rab7 protein families in PVCs and mediate PVC maturation. The sequence is that of Vacuolar fusion protein CCZ1 homolog from Oryza sativa subsp. japonica (Rice).